The chain runs to 298 residues: Ribosomal protein L11 methyltransferase (298 aa).

S-adenosyl-L-methionine contacts are provided by Thr-139, Gly-163, Asp-185, and Asn-232.

It belongs to the methyltransferase superfamily. PrmA family.

Its subcellular location is the cytoplasm. It catalyses the reaction L-lysyl-[protein] + 3 S-adenosyl-L-methionine = N(6),N(6),N(6)-trimethyl-L-lysyl-[protein] + 3 S-adenosyl-L-homocysteine + 3 H(+). In terms of biological role, methylates ribosomal protein L11. The chain is Ribosomal protein L11 methyltransferase from Microcystis aeruginosa (strain NIES-843 / IAM M-2473).